A 270-amino-acid chain; its full sequence is Transcription factor bHLH113 (270 aa).

The disordered stretch occupies residues 109-153 (CTVDKSTKSSTKKRTGTGNGQESDQNRKPGKKGKRNQEKSSVGIA). The region spanning 144 to 193 (NQEKSSVGIAKVRKERLGERIAALQQLVSPYGKTDAASVLHEAMGYIKFL) is the bHLH domain.

As to quaternary structure, homodimer.

It localises to the nucleus. This Arabidopsis thaliana (Mouse-ear cress) protein is Transcription factor bHLH113 (BHLH113).